The chain runs to 103 residues: Signal recognition particle 19 kDa protein (103 aa).

This sequence belongs to the SRP19 family. Part of the signal recognition particle protein translocation system, which is composed of SRP and FtsY. Archaeal SRP consists of a 7S RNA molecule of 300 nucleotides and two protein subunits: SRP54 and SRP19.

Its subcellular location is the cytoplasm. Functionally, involved in targeting and insertion of nascent membrane proteins into the cytoplasmic membrane. Binds directly to 7S RNA and mediates binding of the 54 kDa subunit of the SRP. The polypeptide is Signal recognition particle 19 kDa protein (Hyperthermus butylicus (strain DSM 5456 / JCM 9403 / PLM1-5)).